The chain runs to 116 residues: Large ribosomal subunit protein bL19 (116 aa).

This sequence belongs to the bacterial ribosomal protein bL19 family.

This protein is located at the 30S-50S ribosomal subunit interface and may play a role in the structure and function of the aminoacyl-tRNA binding site. In Haemophilus ducreyi (strain 35000HP / ATCC 700724), this protein is Large ribosomal subunit protein bL19.